A 184-amino-acid polypeptide reads, in one-letter code: Elongation factor P (184 aa).

This sequence belongs to the elongation factor P family.

It localises to the cytoplasm. It participates in protein biosynthesis; polypeptide chain elongation. Its function is as follows. Involved in peptide bond synthesis. Stimulates efficient translation and peptide-bond synthesis on native or reconstituted 70S ribosomes in vitro. Probably functions indirectly by altering the affinity of the ribosome for aminoacyl-tRNA, thus increasing their reactivity as acceptors for peptidyl transferase. The protein is Elongation factor P of Variovorax paradoxus (strain S110).